We begin with the raw amino-acid sequence, 812 residues long: Valine--tRNA ligase (812 aa).

The short motif at 46-56 (PTVSGQLHIGH) is the 'HIGH' region element. A 'KMSKS' region motif is present at residues 536-540 (KMSKS). K539 contacts ATP.

It belongs to the class-I aminoacyl-tRNA synthetase family. ValS type 2 subfamily. As to quaternary structure, monomer.

It localises to the cytoplasm. It carries out the reaction tRNA(Val) + L-valine + ATP = L-valyl-tRNA(Val) + AMP + diphosphate. Functionally, catalyzes the attachment of valine to tRNA(Val). As ValRS can inadvertently accommodate and process structurally similar amino acids such as threonine, to avoid such errors, it has a 'posttransfer' editing activity that hydrolyzes mischarged Thr-tRNA(Val) in a tRNA-dependent manner. The sequence is that of Valine--tRNA ligase from Rickettsia bellii (strain OSU 85-389).